The following is a 206-amino-acid chain: Glycerol-3-phosphate acyltransferase (206 aa).

The next 5 helical transmembrane spans lie at 3 to 23 (LGWL…SYII), 51 to 71 (VGPA…AVVV), 83 to 103 (FAAA…YYGF), 113 to 133 (IGVL…IAIG), and 162 to 182 (WFGY…LSMW).

This sequence belongs to the PlsY family. In terms of assembly, probably interacts with PlsX.

It is found in the cell membrane. It catalyses the reaction an acyl phosphate + sn-glycerol 3-phosphate = a 1-acyl-sn-glycero-3-phosphate + phosphate. The protein operates within lipid metabolism; phospholipid metabolism. In terms of biological role, catalyzes the transfer of an acyl group from acyl-phosphate (acyl-PO(4)) to glycerol-3-phosphate (G3P) to form lysophosphatidic acid (LPA). This enzyme utilizes acyl-phosphate as fatty acyl donor, but not acyl-CoA or acyl-ACP. The sequence is that of Glycerol-3-phosphate acyltransferase from Halalkalibacterium halodurans (strain ATCC BAA-125 / DSM 18197 / FERM 7344 / JCM 9153 / C-125) (Bacillus halodurans).